A 520-amino-acid chain; its full sequence is Succinyl-CoA:3-ketoacid coenzyme A transferase 2A, mitochondrial (520 aa).

The N-terminal 39 residues, 1 to 39, are a transit peptide targeting the mitochondrion; sequence MAALRLLAWAFSRRVSAHRPQPTLPHHLIRHYPTTRCGK. Positions 280–299 are disordered; sequence ERLTTRDSPPAPGSKDQDPK. Residue E342 is the 5-glutamyl coenzyme A thioester intermediate of the active site.

This sequence belongs to the 3-oxoacid CoA-transferase family. In terms of assembly, homodimer. Expressed in flagella of epididymal sperm.

It is found in the mitochondrion. It catalyses the reaction a 3-oxo acid + succinyl-CoA = a 3-oxoacyl-CoA + succinate. It functions in the pathway ketone metabolism; succinyl-CoA degradation; acetoacetyl-CoA from succinyl-CoA: step 1/1. Functionally, key enzyme for ketone body catabolism. Transfers the CoA moiety from succinate to acetoacetate. Formation of the enzyme-CoA intermediate proceeds via an unstable anhydride species formed between the carboxylate groups of the enzyme and substrate. Probably play and important roles in the energy metabolism of spermatozoa. In Rattus norvegicus (Rat), this protein is Succinyl-CoA:3-ketoacid coenzyme A transferase 2A, mitochondrial (Oxct2a).